We begin with the raw amino-acid sequence, 692 residues long: Elongation factor G (692 aa).

The 275-residue stretch at 8–282 folds into the tr-type G domain; sequence EKTRNIGIMA…AVVEYMPAPT (275 aa). GTP is bound by residues 17–24, 81–85, and 135–138; these read AHIDAGKT, DTPGH, and NKMD. Positions 285 to 304 are disordered; it reads PNIKGVHPETGEADERHSSD. Over residues 290–304 the composition is skewed to basic and acidic residues; that stretch reads VHPETGEADERHSSD.

Belongs to the TRAFAC class translation factor GTPase superfamily. Classic translation factor GTPase family. EF-G/EF-2 subfamily.

It localises to the cytoplasm. Catalyzes the GTP-dependent ribosomal translocation step during translation elongation. During this step, the ribosome changes from the pre-translocational (PRE) to the post-translocational (POST) state as the newly formed A-site-bound peptidyl-tRNA and P-site-bound deacylated tRNA move to the P and E sites, respectively. Catalyzes the coordinated movement of the two tRNA molecules, the mRNA and conformational changes in the ribosome. The sequence is that of Elongation factor G from Desulfitobacterium hafniense (strain DSM 10664 / DCB-2).